The sequence spans 266 residues: Type II pantothenate kinase (266 aa).

ATP is bound at residue 6 to 13 (DAGGTLIK). The active-site Proton acceptor is the E70. Residues T99, 121-125 (GGMIQ), Y137, and S225 contribute to the ATP site.

Belongs to the type II pantothenate kinase family. As to quaternary structure, homodimer.

Its subcellular location is the cytoplasm. It catalyses the reaction (R)-pantothenate + ATP = (R)-4'-phosphopantothenate + ADP + H(+). The protein operates within cofactor biosynthesis; coenzyme A biosynthesis; CoA from (R)-pantothenate: step 1/5. In terms of biological role, catalyzes the phosphorylation of pantothenate (Pan), the first step in CoA biosynthesis. The chain is Type II pantothenate kinase from Staphylococcus haemolyticus (strain JCSC1435).